Consider the following 403-residue polypeptide: Queuine tRNA-ribosyltransferase catalytic subunit 1 (403 aa).

Position 2 is an N-acetylalanine (Ala-2). Asp-105 acts as the Proton acceptor in catalysis. Queuine is bound at residue 105-109 (DSGGF). Phosphoserine is present on Ser-139. Queuine-binding residues include Asp-159, Gln-202, and Gly-229. The tract at residues 260-266 (GVGYATD) is RNA binding. Catalysis depends on Asp-279, which acts as the Nucleophile. The RNA binding; important for wobble base 34 recognition stretch occupies residues 284–288 (TRTAR). The Zn(2+) site is built by Cys-317, Cys-319, Cys-322, and His-348.

The protein belongs to the queuine tRNA-ribosyltransferase family. In terms of assembly, heterodimer of a catalytic subunit QTRT1 and an accessory subunit QTRT2. The cofactor is Zn(2+).

It is found in the cytoplasm. Its subcellular location is the mitochondrion outer membrane. The enzyme catalyses guanosine(34) in tRNA + queuine = queuosine(34) in tRNA + guanine. Catalytic subunit of the queuine tRNA-ribosyltransferase (TGT) that catalyzes the base-exchange of a guanine (G) residue with queuine (Q) at position 34 (anticodon wobble position) in tRNAs with GU(N) anticodons (tRNA-Asp, -Asn, -His and -Tyr), resulting in the hypermodified nucleoside queuosine (7-(((4,5-cis-dihydroxy-2-cyclopenten-1-yl)amino)methyl)-7-deazaguanosine). Catalysis occurs through a double-displacement mechanism. The nucleophile active site attacks the C1' of nucleotide 34 to detach the guanine base from the RNA, forming a covalent enzyme-RNA intermediate. The proton acceptor active site deprotonates the incoming queuine, allowing a nucleophilic attack on the C1' of the ribose to form the product. The chain is Queuine tRNA-ribosyltransferase catalytic subunit 1 from Rattus norvegicus (Rat).